The primary structure comprises 831 residues: Molybdenum cofactor sulfurase (831 aa).

At Lys262 the chain carries N6-(pyridoxal phosphate)lysine. The active site involves Cys422. One can recognise an MOSC domain in the interval 651–823; the sequence is AWLSEFLGKP…LSIGSHVIPK (173 aa).

It belongs to the class-V pyridoxal-phosphate-dependent aminotransferase family. MOCOS subfamily. It depends on pyridoxal 5'-phosphate as a cofactor.

It catalyses the reaction Mo-molybdopterin + L-cysteine + AH2 = thio-Mo-molybdopterin + L-alanine + A + H2O. It functions in the pathway cofactor biosynthesis; molybdopterin biosynthesis. Its function is as follows. Sulfurates the molybdenum cofactor. Sulfation of molybdenum is essential for xanthine dehydrogenase (XDH) and aldehyde oxidase (ADO) enzymes in which molybdenum cofactor is liganded by 1 oxygen and 1 sulfur atom in active form. The polypeptide is Molybdenum cofactor sulfurase (mocos) (Danio rerio (Zebrafish)).